The chain runs to 452 residues: Interferon-induced protein 44-like (452 aa).

One can recognise a TLDc domain in the interval methionine 1–glutamate 159.

It belongs to the IFI44 family. In terms of assembly, interacts with FKBP5; this interaction modulates IKBKB and IKBKE kinase activities.

It localises to the cytoplasm. Functionally, type I interferon-stimulated gene (ISG) that plays a critical role in antiviral and antibacterial activity. During bacterial infection, promotes macrophage differentiation and facilitates inflammatory cytokine secretion. Plays a role in the control of respiratory syncytial virus/RSV infection, reducing the ability of the virus to replicate. Exhibits a low antiviral activity against hepatitis C virus. Also acts as a feedback regulator of IFN responses by negatively regulating IKBKB and IKBKE kinase activities through interaction with FKBP5. The polypeptide is Interferon-induced protein 44-like (IFI44L) (Homo sapiens (Human)).